The primary structure comprises 315 residues: Thymidylate synthase (315 aa).

DUMP is bound by residues R22 and 177–178; that span reads RR. C197 (nucleophile) is an active-site residue. DUMP-binding positions include 217–220, N228, and 258–260; these read RSAD and HLY. D220 is a (6R)-5,10-methylene-5,6,7,8-tetrahydrofolate binding site. Residue A314 coordinates (6R)-5,10-methylene-5,6,7,8-tetrahydrofolate.

Belongs to the thymidylate synthase family. Bacterial-type ThyA subfamily. As to quaternary structure, homodimer.

The protein localises to the cytoplasm. The enzyme catalyses dUMP + (6R)-5,10-methylene-5,6,7,8-tetrahydrofolate = 7,8-dihydrofolate + dTMP. It participates in pyrimidine metabolism; dTTP biosynthesis. Catalyzes the reductive methylation of 2'-deoxyuridine-5'-monophosphate (dUMP) to 2'-deoxythymidine-5'-monophosphate (dTMP) while utilizing 5,10-methylenetetrahydrofolate (mTHF) as the methyl donor and reductant in the reaction, yielding dihydrofolate (DHF) as a by-product. This enzymatic reaction provides an intracellular de novo source of dTMP, an essential precursor for DNA biosynthesis. This chain is Thymidylate synthase, found in Enterococcus faecalis (strain ATCC 700802 / V583).